We begin with the raw amino-acid sequence, 617 residues long: Erythritol-mannosyl-transferase 1 (617 aa).

2 disordered regions span residues 365–396 (RNPG…IDSR) and 567–617 (RQRK…VTNP). Polar residues predominate over residues 371–381 (GFTSPLNSPTA). Residues 386–396 (KWDEKRPIDSR) are compositionally biased toward basic and acidic residues. Positions 578-603 (TAKTSLSVDTTEVATPTFTDTETSLS) are enriched in polar residues.

The protein belongs to the UDP-glycosyltransferase family.

It participates in secondary metabolite biosynthesis. Functionally, glycosyltransferase; part of the gene cluster that mediates the biosynthesis of mannosylerythritol lipids (MELs), surface-active substances that enhance the availability of water-insoluble substrates. Depending on the number of acetyl groups, mannosylerythritol lipids can be differentiated into MEL A (fully acetylated), MEL B and MEL C (monoacetylated at R-6 and R-4, respectively), and the fully deacetylated MEL D. The first step in the pathway is the generation of mannosylerythritol by the glycosyltransferase EMT1 which catalyzes the transfer of GDP-mannose to the C-4 atom of meso-erythritol. This reaction has to be stereospecific, since only mannosyl-D-erythritol is generated. The produced disaccharide is subsequently acylated with fatty acids of various lengths by the acyltransferases MAC1 and MAC2 at positions C-2 and C-3, repectively. The existence of MEL derivatives which carry an acetyl group at C-2 implies that at least MAC1 also accepts acetyl-CoA as a donor. The final step of MEL biosynthesis is the acetylation of the fully acylated mannosylerythritol lipids catalyzed by the acetyl-CoA-dependent acetyltransferase MAT1. MAT1 displays a relaxed regioselectivity and is able to transfer acetylgroups to both positions C-4 and C-6 of the mannosyl moiety. The polypeptide is Erythritol-mannosyl-transferase 1 (Pseudozyma antarctica (strain T-34) (Yeast)).